The sequence spans 141 residues: Hemoglobin subunit alpha-D (141 aa).

The region spanning 1 to 141 is the Globin domain; the sequence is MLTEDDKQLI…VSAVLAEKYR (141 aa). Residues His-58 and His-87 each contribute to the heme b site.

This sequence belongs to the globin family. Heterotetramer of two alpha-D chains and two beta chains. In terms of tissue distribution, red blood cells.

In terms of biological role, involved in oxygen transport from the lung to the various peripheral tissues. In Chelonoidis niger (Galapagos giant tortoise), this protein is Hemoglobin subunit alpha-D (HBAD).